Reading from the N-terminus, the 183-residue chain is Senescence-associated protein DIN1 (183 aa).

The Rhodanese domain maps to 83-183 (AQAGYKHLDV…WTENELPVEE (101 aa)).

Functionally, is thought to act during the early stages of leaf senescence. The chain is Senescence-associated protein DIN1 (DIN1) from Raphanus sativus (Radish).